Consider the following 143-residue polypeptide: Hemoglobin cathodic subunit alpha (143 aa).

S1 is subject to N-acetylserine. The 143-residue stretch at 1 to 143 (SLAPGDKTVV…VCAALSDKYR (143 aa)) folds into the Globin domain. H59 provides a ligand contact to O2. H89 lines the heme b pocket.

It belongs to the globin family. Heterotetramer of two alpha chains and two beta chains. In terms of tissue distribution, red blood cells.

Involved in oxygen transport from gills to the various peripheral tissues. The sequence is that of Hemoglobin cathodic subunit alpha from Gymnothorax unicolor (Brown moray).